A 1168-amino-acid chain; its full sequence is Protein VARIATION IN COMPOUND TRIGGERED ROOT growth response (1168 aa).

One can recognise a TIR domain in the interval 10–171; the sequence is WVYDVFLSFS…EIANDVLAKL (162 aa). The active site involves glutamate 85. In terms of domain architecture, NB-ARC spans 187-452; the sequence is EDHIANMSVL…ACLFNHVKVR (266 aa). 10 LRR repeats span residues 539-562, 606-629, 631-653, 676-699, 701-720, 721-744, 795-820, 839-865, 873-896, and 1065-1089; these read TSKV…LFLD, LRNL…AMSF, CLKE…SKAT, LNKL…GFNL, SLDY…PEFA, TNIS…YFKN, LNNL…NLES, STNI…FFNL, CREL…SFSN, and NVPL…DWRS.

The protein belongs to the disease resistance NB-LRR family. In terms of assembly, part of a nuclear protein complex made of VICTR, PAD4 and EDS1. Interacts (via TIR domain) with PAD4 and EDS1.

It is found in the cytoplasm. Its subcellular location is the nucleus. The enzyme catalyses NAD(+) + H2O = ADP-D-ribose + nicotinamide + H(+). In terms of biological role, disease resistance protein of the TIR-NB-LRR-type. Part of the RPS6 locus that contains a cluster of several paralogous disease resistance (R) genes. Resistance proteins guard the plant against pathogens that contain an appropriate avirulence protein via an indirect interaction with this avirulence protein. That triggers a defense system including the hypersensitive response, which restricts the pathogen growth. Required for [5-(3,4-dichlorophenyl)furan-2-yl]-piperidine-1-ylmethanethione-(DFPM-) induced root growth arrest due to reduced number of meristem cells in the division zone of the primary root and inhibition of abscisic acid- (ABA-) induced stomatal closing. The protein is Protein VARIATION IN COMPOUND TRIGGERED ROOT growth response (VICTR) of Arabidopsis thaliana (Mouse-ear cress).